Here is a 401-residue protein sequence, read N- to C-terminus: Prion-like-(Q/N-rich) domain-bearing protein 8 (401 aa).

Residues 70–84 are compositionally biased toward low complexity; the sequence is QRSQNQNQNSNNPQQ. 2 disordered regions span residues 70–109 and 122–303; these read QRSQ…SNQQ and YKNS…SNTQ. Polar residues-rich tracts occupy residues 89–109 and 125–134; these read TSQS…SNQQ and SEVTTSTPTP. Low complexity-rich tracts occupy residues 135–181, 188–239, and 247–289; these read NGFN…QNLG, NNQN…NQNG, and FSNG…QNPN.

Expressed in the pharyngeal glands.

The chain is Prion-like-(Q/N-rich) domain-bearing protein 8 (pqn-8) from Caenorhabditis elegans.